A 307-amino-acid chain; its full sequence is UDP-3-O-acyl-N-acetylglucosamine deacetylase (307 aa).

Zn(2+) contacts are provided by histidine 78, histidine 241, and aspartate 245. Histidine 268 acts as the Proton donor in catalysis.

It belongs to the LpxC family. Zn(2+) is required as a cofactor.

The enzyme catalyses a UDP-3-O-[(3R)-3-hydroxyacyl]-N-acetyl-alpha-D-glucosamine + H2O = a UDP-3-O-[(3R)-3-hydroxyacyl]-alpha-D-glucosamine + acetate. Its pathway is glycolipid biosynthesis; lipid IV(A) biosynthesis; lipid IV(A) from (3R)-3-hydroxytetradecanoyl-[acyl-carrier-protein] and UDP-N-acetyl-alpha-D-glucosamine: step 2/6. Catalyzes the hydrolysis of UDP-3-O-myristoyl-N-acetylglucosamine to form UDP-3-O-myristoylglucosamine and acetate, the committed step in lipid A biosynthesis. The chain is UDP-3-O-acyl-N-acetylglucosamine deacetylase from Acidovorax ebreus (strain TPSY) (Diaphorobacter sp. (strain TPSY)).